A 268-amino-acid chain; its full sequence is Undecaprenyl-diphosphatase (268 aa).

The next 7 membrane-spanning stretches (helical) occupy residues 47 to 67 (FAVL…FAKL), 83 to 103 (FVIG…VAGS), 109 to 129 (LFNP…LLWV), 144 to 164 (FPLP…IPGV), 184 to 204 (AAEF…VYDF), 218 to 238 (IVAI…KTFL), and 246 to 266 (FELF…ALAM).

Belongs to the UppP family.

It is found in the cell inner membrane. The catalysed reaction is di-trans,octa-cis-undecaprenyl diphosphate + H2O = di-trans,octa-cis-undecaprenyl phosphate + phosphate + H(+). Catalyzes the dephosphorylation of undecaprenyl diphosphate (UPP). Confers resistance to bacitracin. This chain is Undecaprenyl-diphosphatase, found in Rhodopseudomonas palustris (strain BisB5).